The primary structure comprises 93 residues: Small ribosomal subunit protein uS19 (93 aa).

Belongs to the universal ribosomal protein uS19 family.

Its function is as follows. Protein S19 forms a complex with S13 that binds strongly to the 16S ribosomal RNA. This is Small ribosomal subunit protein uS19 from Campylobacter lari (strain RM2100 / D67 / ATCC BAA-1060).